A 129-amino-acid chain; its full sequence is Fluoride-specific ion channel FluC (129 aa).

4 helical membrane-spanning segments follow: residues 1–21 (MLMK…LGSA), 35–55 (GGLP…IGFI), 71–91 (LFLV…IFEN), and 105–125 (AYLA…TFFA). Na(+) contacts are provided by Gly79 and Thr82.

The protein belongs to the fluoride channel Fluc/FEX (TC 1.A.43) family.

It is found in the cell inner membrane. The catalysed reaction is fluoride(in) = fluoride(out). With respect to regulation, na(+) is not transported, but it plays an essential structural role and its presence is essential for fluoride channel function. Its function is as follows. Fluoride-specific ion channel. Important for reducing fluoride concentration in the cell, thus reducing its toxicity. This is Fluoride-specific ion channel FluC from Chlorobium phaeobacteroides (strain DSM 266 / SMG 266 / 2430).